The chain runs to 405 residues: Phosphoglycerate kinase (405 aa).

Substrate is bound by residues 24-26, arginine 40, 63-66, arginine 122, and arginine 162; these read DFN and HLGR. Residues lysine 212, glutamate 331, and 361 to 364 each bind ATP; that span reads GGDS.

Belongs to the phosphoglycerate kinase family. Monomer.

It localises to the cytoplasm. The enzyme catalyses (2R)-3-phosphoglycerate + ATP = (2R)-3-phospho-glyceroyl phosphate + ADP. It functions in the pathway carbohydrate degradation; glycolysis; pyruvate from D-glyceraldehyde 3-phosphate: step 2/5. This Corynebacterium glutamicum (strain R) protein is Phosphoglycerate kinase.